The chain runs to 309 residues: Succinoglycan biosynthesis protein ExoM (309 aa).

The protein belongs to the glycosyltransferase 2 family.

It is found in the cell inner membrane. Its pathway is glycan metabolism; exopolysaccharide biosynthesis. Functionally, glycosyltransferase required for the synthesis of succinoglycan (EPS I). Needed for the addition of the fourth sugar (glucose), catalyzes the formation of a beta-1,4 linkage between the third acetylated sugar and the fourth sugar. The polypeptide is Succinoglycan biosynthesis protein ExoM (exoM) (Rhizobium meliloti (strain 1021) (Ensifer meliloti)).